A 147-amino-acid chain; its full sequence is Large ribosomal subunit protein uL15 (147 aa).

The disordered stretch occupies residues 1–62; it reads MDLNTLKPAL…GQMPLQRRLP (62 aa). Residues 30–39 show a composition bias toward basic residues; it reads TATKGHKGQK.

Belongs to the universal ribosomal protein uL15 family. Part of the 50S ribosomal subunit.

Functionally, binds to the 23S rRNA. The polypeptide is Large ribosomal subunit protein uL15 (Pelobacter propionicus (strain DSM 2379 / NBRC 103807 / OttBd1)).